A 251-amino-acid chain; its full sequence is Mediator of RNA polymerase II transcription subunit 7 (251 aa).

Residues 1–38 (MLPGFGAQTVSPFPNPPEYASAYTSDRINNGSAPPPPH) are disordered. Polar residues predominate over residues 22–32 (AYTSDRINNGS).

This sequence belongs to the Mediator complex subunit 7 family. As to quaternary structure, component of the Mediator complex. Interacts with mdt-10 and mdt-21. Interacts with RNA polymerase II.

The protein localises to the nucleus. Component of the Mediator complex, a coactivator involved in the regulated transcription of nearly all RNA polymerase II-dependent genes. Mediator functions as a bridge to convey information from gene-specific regulatory proteins to the basal RNA polymerase II transcription machinery. Mediator is recruited to promoters by direct interactions with regulatory proteins and serves as a scaffold for the assembly of a functional preinitiation complex with RNA polymerase II and the general transcription factors. Required for germ cell development and gonadal growth. This chain is Mediator of RNA polymerase II transcription subunit 7 (let-49), found in Caenorhabditis elegans.